The following is a 153-amino-acid chain: Transcriptional repressor NrdR (153 aa).

A zinc finger lies at 3–34 (CPFCGHLEDRVIDSRAGGAGEVIRRRRECASC). The 91-residue stretch at 49–139 (PTVVKKDGRR…VYRSFRDIDQ (91 aa)) folds into the ATP-cone domain.

It belongs to the NrdR family. The cofactor is Zn(2+).

Negatively regulates transcription of bacterial ribonucleotide reductase nrd genes and operons by binding to NrdR-boxes. The sequence is that of Transcriptional repressor NrdR from Sorangium cellulosum (strain So ce56) (Polyangium cellulosum (strain So ce56)).